The sequence spans 143 residues: Deoxyuridine 5'-triphosphate nucleotidohydrolase (143 aa).

Ser65, Val78, Arg132, and Gly138 together coordinate dUMP.

This sequence belongs to the dUTPase family. Homotrimer. Mg(2+) is required as a cofactor.

It catalyses the reaction dUTP + H2O = dUMP + diphosphate + H(+). It functions in the pathway pyrimidine metabolism; dUMP biosynthesis; dUMP from dCTP (dUTP route): step 2/2. In terms of biological role, involved in nucleotide metabolism via production of dUMP, the immediate precursor of thymidine nucleotides, and decreases the intracellular concentration of dUTP so that uracil cannot be incorporated into DNA. This Antonospora locustae (Microsporidian parasite) protein is Deoxyuridine 5'-triphosphate nucleotidohydrolase (DUT1).